The primary structure comprises 600 residues: Dihydroxy-acid dehydratase (600 aa).

Asp82 contacts Mg(2+). Cys123 serves as a coordination point for [2Fe-2S] cluster. Asp124 and Lys125 together coordinate Mg(2+). An N6-carboxylysine modification is found at Lys125. Position 192 (Cys192) interacts with [2Fe-2S] cluster. Position 489 (Glu489) interacts with Mg(2+). The active-site Proton acceptor is the Ser515.

It belongs to the IlvD/Edd family. Homodimer. [2Fe-2S] cluster serves as cofactor. It depends on Mg(2+) as a cofactor.

The enzyme catalyses (2R)-2,3-dihydroxy-3-methylbutanoate = 3-methyl-2-oxobutanoate + H2O. It carries out the reaction (2R,3R)-2,3-dihydroxy-3-methylpentanoate = (S)-3-methyl-2-oxopentanoate + H2O. It participates in amino-acid biosynthesis; L-isoleucine biosynthesis; L-isoleucine from 2-oxobutanoate: step 3/4. It functions in the pathway amino-acid biosynthesis; L-valine biosynthesis; L-valine from pyruvate: step 3/4. In terms of biological role, functions in the biosynthesis of branched-chain amino acids. Catalyzes the dehydration of (2R,3R)-2,3-dihydroxy-3-methylpentanoate (2,3-dihydroxy-3-methylvalerate) into 2-oxo-3-methylpentanoate (2-oxo-3-methylvalerate) and of (2R)-2,3-dihydroxy-3-methylbutanoate (2,3-dihydroxyisovalerate) into 2-oxo-3-methylbutanoate (2-oxoisovalerate), the penultimate precursor to L-isoleucine and L-valine, respectively. The chain is Dihydroxy-acid dehydratase from Phocaeicola vulgatus (strain ATCC 8482 / DSM 1447 / JCM 5826 / CCUG 4940 / NBRC 14291 / NCTC 11154) (Bacteroides vulgatus).